Consider the following 944-residue polypeptide: Translation factor GUF1 homolog, mitochondrial (944 aa).

The tr-type G domain occupies 201 to 379 (KNVRNFCILA…IITDIPYPPI (179 aa)). GTP is bound by residues 210-217 (AHIDSGKS), 271-275 (DTPGH), and 325-328 (NKID).

Belongs to the TRAFAC class translation factor GTPase superfamily. Classic translation factor GTPase family. LepA subfamily.

The protein localises to the mitochondrion inner membrane. It carries out the reaction GTP + H2O = GDP + phosphate + H(+). Its function is as follows. Promotes mitochondrial protein synthesis. May act as a fidelity factor of the translation reaction, by catalyzing a one-codon backward translocation of tRNAs on improperly translocated ribosomes. Binds to mitochondrial ribosomes in a GTP-dependent manner. The protein is Translation factor GUF1 homolog, mitochondrial of Plasmodium yoelii yoelii.